The sequence spans 274 residues: Thiamine kinase (274 aa).

It belongs to the thiamine kinase family.

It catalyses the reaction thiamine + ATP = thiamine phosphate + ADP + H(+). The protein operates within cofactor biosynthesis; thiamine diphosphate biosynthesis; thiamine phosphate from thiamine: step 1/1. Catalyzes the ATP-dependent phosphorylation of thiamine to thiamine phosphate. Is involved in thiamine salvage. The polypeptide is Thiamine kinase (Escherichia coli O17:K52:H18 (strain UMN026 / ExPEC)).